A 114-amino-acid chain; its full sequence is Large ribosomal subunit protein bL19 (114 aa).

The protein belongs to the bacterial ribosomal protein bL19 family.

Its function is as follows. This protein is located at the 30S-50S ribosomal subunit interface and may play a role in the structure and function of the aminoacyl-tRNA binding site. The protein is Large ribosomal subunit protein bL19 of Clostridium botulinum (strain ATCC 19397 / Type A).